The following is a 300-amino-acid chain: Arrestin domain-containing protein 4 (300 aa).

Short sequence motifs (PPxY motif) lie at residues 231–234 and 276–279; these read PPNY and PPLY.

This sequence belongs to the arrestin family. Interacts with ADRB2. Interacts (via PPxY motifs) with ITCH, NEDD4L and WWP2. Interacts with AVPR2. Identified in a complex containing at least ARRDC4, AVPR2 and HGS. Interacts with SLC11A2; controls the incorporation of SLC11A2 into extracellular vesicles through an ubiquitination-dependent mechanism. Interacts with TRIM65.

The protein localises to the early endosome. Its subcellular location is the cell membrane. The protein resides in the cytoplasmic vesicle. Its function is as follows. Functions as an adapter recruiting ubiquitin-protein ligases to their specific substrates. Plays a role in endocytosis of activated G protein-coupled receptors (GPCRs) Through an ubiquitination-dependent mechanism also plays a role in the incorporation of SLC11A2 into extracellular vesicles. May play a role in glucose uptake. Participates in innate immune response by promoting IFIH1/MDA5 activation through interaction with TRIM65. The protein is Arrestin domain-containing protein 4 (Arrdc4) of Rattus norvegicus (Rat).